The chain runs to 234 residues: MLVLDDVQYTYQRELFRFELSIERGQIVSLMGPSGAGKSTLLALVAGFIHPDQGDIRVDGESIVRKEPYQRPFSMLFQEHNLFSHLSVRDNIGLGLHPGLKLTVDQKRQVEQAAQQVGVAEYLDRLPEHLSGGQRQRVALARCFVQPHPMWLLDEPFSALDPVLREEMLSLVKKLAAERGITVLMVTHHLSDAKAIASHFAFVANGKVEAVGEIDALTAEHPSKTLQAFVRAAG.

One can recognise an ABC transporter domain in the interval 2–230 (LVLDDVQYTY…HPSKTLQAFV (229 aa)). Position 32–39 (32–39 (GPSGAGKS)) interacts with ATP.

The protein belongs to the ABC transporter superfamily. Thiamine importer (TC 3.A.1.19.1) family. The complex is composed of two ATP-binding proteins (ThiQ), two transmembrane proteins (ThiP) and a solute-binding protein (ThiB).

It localises to the cell inner membrane. The catalysed reaction is thiamine(out) + ATP + H2O = thiamine(in) + ADP + phosphate + H(+). Functionally, part of the ABC transporter complex ThiBPQ involved in thiamine import. Responsible for energy coupling to the transport system. In Vibrio parahaemolyticus serotype O3:K6 (strain RIMD 2210633), this protein is Thiamine import ATP-binding protein ThiQ.